The sequence spans 485 residues: MDPTALVEAIVEEVACPICMTFLREPMSIDCGHSFCHSCLSGLWEIPGESQNWGYTCPLCRAPVQPRNLRPNWQLANVVEKVRLLRLHPGMGLKGDLCERHGEKLKMFCKEDVLIMCEACSQSPEHEAHSVVPMEDVAWEYKWELHEALEHLKKEQEEAWKLEVGERKRTATWKIQVETRKQSIVWEFEKYQRLLEKKQPPHRQLGAEVAAALASLQREAAETMQKLELNHSELIQQSQVLWRMIAELKERSQRPVRWMLQDIQEVLNRSKSWSLQQPEPISLELKTDCRVLGLREILKTYAADVRLDPDTAYSRLIVSEDRKRVHYGDTNQKLPDNPERFYRYNIVLGSQCISSGRHYWEVEVGDRSEWGLGVCKQNVDRKEVVYLSPHYGFWVIRLRKGNEYRAGTDEYPILSLPVPPRRVGIFVDYEAHDISFYNVTDCGSHIFTFPRYPFPGRLLPYFSPCYSIGTNNTAPLAICSLDGED.

Residues 16–61 form an RING-type zinc finger; the sequence is CPICMTFLREPMSIDCGHSFCHSCLSGLWEIPGESQNWGYTCPLCR. The B box-type zinc finger occupies 93-134; sequence LKGDLCERHGEKLKMFCKEDVLIMCEACSQSPEHEAHSVVPM. Positions 98, 101, 120, and 126 each coordinate Zn(2+). Residues 207-239 adopt a coiled-coil conformation; it reads AEVAAALASLQREAAETMQKLELNHSELIQQSQ. In terms of domain architecture, B30.2/SPRY spans 285–481; the sequence is LKTDCRVLGL…NTAPLAICSL (197 aa).

Belongs to the TRIM/RBCC family. In terms of assembly, interacts with AR/androgen receptor (via ligand-binding domain). Interacts with KAT5/TIP60. Post-translationally, auto-ubiquitinated. Widely expressed. Expressed at high levels in prostate cancer cell lines. Up-regulation could be restricted to androgen-dependent cells.

It localises to the cytoplasm. Its subcellular location is the perinuclear region. It is found in the nucleus. It catalyses the reaction S-ubiquitinyl-[E2 ubiquitin-conjugating enzyme]-L-cysteine + [acceptor protein]-L-lysine = [E2 ubiquitin-conjugating enzyme]-L-cysteine + N(6)-ubiquitinyl-[acceptor protein]-L-lysine.. It functions in the pathway protein modification; protein ubiquitination. In terms of biological role, functions as a ubiquitin E3 ligase. Acts as a coactivator of androgen receptor (AR) depending on its ubiquitin ligase activity. The sequence is that of E3 ubiquitin-protein ligase TRIM68 (TRIM68) from Homo sapiens (Human).